The sequence spans 503 residues: Interferon regulatory factor 7 (503 aa).

The IRF tryptophan pentad repeat DNA-binding region spans 11–126; the sequence is RVLFGEWLLG…DPHKVYALSR (116 aa). The interval 69 to 88 is disordered; sequence RWPPSSRGGGPPPEAETAER. N6-acetyllysine; by KAT2A and KAT2B is present on Lys-92. 2 disordered regions span residues 133 to 156 and 242 to 277; these read GPGT…GPPG and TTPS…SPSA. Residues 146-156 show a composition bias toward pro residues; it reads AVPPPQGGPPG. The segment at 284–456 is necessary for the interaction with NMI; the sequence is PSPGALDVTI…SLVLVKLEPW (173 aa). A Glycyl lysine isopeptide (Lys-Gly) (interchain with G-Cter in ubiquitin) cross-link involves residue Lys-375. Residues Lys-444 and Lys-446 each participate in a glycyl lysine isopeptide (Lys-Gly) (interchain with G-Cter in SUMO) cross-link. Phosphoserine occurs at positions 471, 472, and 475. Residues Ser-477 and Ser-479 each carry the phosphoserine; by TBK1 and IKKE modification. Phosphoserine occurs at positions 483, 484, and 487.

This sequence belongs to the IRF family. In terms of assembly, monomer. Homodimer; phosphorylation-induced. Heterodimer with IRF3. Interacts with TICAM1 and TICAM2. Interacts with MYD88 and TRAF6. Interacts with TRIM35. Interacts with NMI; the interaction is direct and leads to the inhibition of IRF7-mediated type I IFN production. Interacts with GBP4; preventing interaction between TRAF6 and IRF7, resulting in impaired TRAF6-mediated IRF7 ubiquitination. As to quaternary structure, (Microbial infection) Interacts with Epstein-Barr virus LF2 and LMP1. (Microbial infection) Interacts with rotavirus A NSP1; this interaction leads to the proteasome-dependent degradation of IRF7. In terms of assembly, (Microbial infection) Interacts with human herpes virus 8/HHV-8 proteins ORF45 and vIRF-1. As to quaternary structure, (Microbial infection) Interacts with human T-cell leukemia virus 1/HTLV-1 protein HBZ. (Microbial infection) Interacts with Seneca Valley virus protease 3C; this interaction is involved in the suppression of IRF7 expression and phosphorylation by the virus. In terms of assembly, (Microbial infection) Interacts with ebolavirus VP35; this interaction mediates the sumoylation of IRF7 and contributes to the viral inhibition of IFN-type I production. As to quaternary structure, (Microbial infection) Interacts with severe fever with thrombocytopenia syndrome virus (SFTSV) NSs; this interaction sequesters IRF7 in NSs-induced cytoplasmic inclusion bodies. (Microbial infection) Interacts with herpes virus 8/HHV-8 protein vIRF-4; this interaction prevents IRF7 dimerization and subsequent activation. In terms of assembly, (Microbial infection) Interacts with human metapneumovirus protein M2-2; this interaction prevents IRF7 phosphorlyation and subsequent TLR7/9-dependent IFN-alpha induction. Acetylation inhibits its DNA-binding ability and activity. Post-translationally, in response to a viral infection, phosphorylated on Ser-477 and Ser-479 by TBK1 and IKBKE1. Phosphorylation, and subsequent activation is inhibited by vaccinia virus protein E3. In TLR7- and TLR9-mediated signaling pathway, phosphorylated by IRAK1. In terms of processing, TRAF6-mediated ubiquitination is required for IRF7 activation. TRIM35 mediates IRF7 'Lys-48'-linked polyubiquitination and subsequent proteasomal degradation. Ubiquitinated by UBE3C, leading to its degradation. Sumoylated by TRIM28, which inhibits its transactivation activity. Post-translationally, (Microbial infection) Cleaved and inactivated by the protease 3C of enterovirus 71 allowing the virus to disrupt the host type I interferon production. In terms of processing, (Microbial infection) Cleaved and inactivated by the protease 3C of human enterovirus 68D (EV68) allowing the virus to disrupt the host type I interferon production. 'Lys-48'-linked polyubiquitination and subsequent proteasomal degradation is NMI-dependent in response to Sendai virus infection. Post-translationally, 'Lys-63'-linked ubiquitination by NEURL3 promotes IRF7 activation. In terms of tissue distribution, expressed predominantly in spleen, thymus and peripheral blood leukocytes.

It localises to the nucleus. Its subcellular location is the cytoplasm. With respect to regulation, in the absence of viral infection, maintained as a monomer in an autoinhibited state and phosphorylation disrupts this autoinhibition leading to the liberation of the DNA-binding and dimerization activities and its nuclear localization where it can activate type I IFN and ISG genes. Functionally, key transcriptional regulator of type I interferon (IFN)-dependent immune responses and plays a critical role in the innate immune response against DNA and RNA viruses. Regulates the transcription of type I IFN genes (IFN-alpha and IFN-beta) and IFN-stimulated genes (ISG) by binding to an interferon-stimulated response element (ISRE) in their promoters. Can efficiently activate both the IFN-beta (IFNB) and the IFN-alpha (IFNA) genes and mediate their induction via both the virus-activated, MyD88-independent pathway and the TLR-activated, MyD88-dependent pathway. Induces transcription of ubiquitin hydrolase USP25 mRNA in response to lipopolysaccharide (LPS) or viral infection in a type I IFN-dependent manner. Required during both the early and late phases of the IFN gene induction but is more critical for the late than for the early phase. Exists in an inactive form in the cytoplasm of uninfected cells and following viral infection, double-stranded RNA (dsRNA), or toll-like receptor (TLR) signaling, becomes phosphorylated by IKBKE and TBK1 kinases. This induces a conformational change, leading to its dimerization and nuclear localization where along with other coactivators it can activate transcription of the type I IFN and ISG genes. Can also play a role in regulating adaptive immune responses by inducing PSMB9/LMP2 expression, either directly or through induction of IRF1. Binds to the Q promoter (Qp) of EBV nuclear antigen 1 a (EBNA1) and may play a role in the regulation of EBV latency. Can activate distinct gene expression programs in macrophages and regulate the anti-tumor properties of primary macrophages. This chain is Interferon regulatory factor 7 (IRF7), found in Homo sapiens (Human).